The following is a 359-amino-acid chain: 4-hydroxy-3-methylbut-2-en-1-yl diphosphate synthase (flavodoxin) (359 aa).

Residues C264, C267, C299, and E306 each coordinate [4Fe-4S] cluster.

It belongs to the IspG family. Requires [4Fe-4S] cluster as cofactor.

It catalyses the reaction (2E)-4-hydroxy-3-methylbut-2-enyl diphosphate + oxidized [flavodoxin] + H2O + 2 H(+) = 2-C-methyl-D-erythritol 2,4-cyclic diphosphate + reduced [flavodoxin]. The protein operates within isoprenoid biosynthesis; isopentenyl diphosphate biosynthesis via DXP pathway; isopentenyl diphosphate from 1-deoxy-D-xylulose 5-phosphate: step 5/6. Its function is as follows. Converts 2C-methyl-D-erythritol 2,4-cyclodiphosphate (ME-2,4cPP) into 1-hydroxy-2-methyl-2-(E)-butenyl 4-diphosphate. The chain is 4-hydroxy-3-methylbut-2-en-1-yl diphosphate synthase (flavodoxin) from Helicobacter pylori (strain ATCC 700392 / 26695) (Campylobacter pylori).